The sequence spans 87 residues: Mitochondrial import protein 2 (87 aa).

Residues 1–53 (MADSEDTSVILQGIDTINSVEGLEEDGYLSDEDTSLSNELADAQRQWEESLQQ) lie on the Cytoplasmic side of the membrane. A helical transmembrane segment spans residues 54–71 (LNKLLNWVLLPLLGKYIG). Topologically, residues 72-87 (RRMAKTLWSRFIEHFV) are mitochondrial intermembrane.

The protein belongs to the MIM2 family. Component of the MIM complex containing at least MIM1 and MIM2. Interacts with MIM1; interaction is direct.

The protein localises to the mitochondrion outer membrane. In terms of biological role, component of the MIM complex required for outer membrane protein import. Involved in import of the subset of proteins with multiple alpha-helical transmembrane segments, including UGO1, TOM20 and FZO1. The protein is Mitochondrial import protein 2 of Saccharomyces cerevisiae (strain ATCC 204508 / S288c) (Baker's yeast).